A 433-amino-acid polypeptide reads, in one-letter code: Serine/threonine-protein phosphatase 2A activator 2 (433 aa).

The segment covering Met1–Ala10 has biased composition (pro residues). 2 disordered regions span residues Met1–Phe67 and Ser367–Trp400. The segment covering Ser11–Ser23 has biased composition (low complexity). Over residues Asn45 to Pro59 the composition is skewed to pro residues. The span at Ser367–Asp382 shows a compositional bias: acidic residues. The segment covering Asp383 to Asp396 has biased composition (basic and acidic residues).

The protein belongs to the PTPA-type PPIase family.

The protein resides in the cytoplasm. It catalyses the reaction [protein]-peptidylproline (omega=180) = [protein]-peptidylproline (omega=0). PPIases accelerate the folding of proteins. It catalyzes the cis-trans isomerization of proline imidic peptide bonds in oligopeptides. Acts as a regulatory subunit for PP2A-like phosphatases modulating their activity or substrate specificity, probably by inducing a conformational change in the catalytic subunit, a direct target of the PPIase. Can reactivate inactive phosphatase PP2A-phosphatase methylesterase complexes (PP2Ai) in presence of ATP and Mg(2+) by dissociating the inactive form from the complex. This is Serine/threonine-protein phosphatase 2A activator 2 (RRD2) from Gibberella zeae (strain ATCC MYA-4620 / CBS 123657 / FGSC 9075 / NRRL 31084 / PH-1) (Wheat head blight fungus).